The primary structure comprises 1218 residues: Protein dispatched (1218 aa).

The helical transmembrane segment at 21–41 threads the bilayer; the sequence is YLVVVSIAVYCVACIIVALVL. The disordered stretch occupies residues 99–135; sequence VETKLHPNHRRRKNKHKNRNKNKRRKEQNQSSHEHHD. Over residues 104-124 the composition is skewed to basic residues; the sequence is HPNHRRRKNKHKNRNKNKRRK. Asn127, Asn176, Asn197, Asn264, Asn319, and Asn388 each carry an N-linked (GlcNAc...) asparagine glycan. Positions 430–624 constitute an SSD domain; it reads AMDLGLENEL…ITWLPASVSI (195 aa). 6 consecutive transmembrane segments (helical) span residues 443–463, 473–493, 504–524, 570–590, 598–618, and 670–690; these read LLLT…ASVW, LMSC…YAIV, LLAV…FLKI, AAAS…ASYS, CFGI…ITWL, and AYLW…IVFW. 3 N-linked (GlcNAc...) asparagine glycosylation sites follow: Asn767, Asn883, and Asn891. Transmembrane regions (helical) follow at residues 975–995, 996–1016, 1019–1039, 1058–1078, and 1087–1107; these read LAVL…VLTV, SLSI…LNIL, IAVS…GIHY, IIGP…IMMA, and IGVF…FFLM.

It belongs to the dispatched family.

The protein resides in the membrane. In terms of biological role, segment polarity protein which functions in hedgehog (Hh) signaling. Regulates the trafficking and the release of cholesterol-modified hedgehog protein from cells of the posterior compartment (P cells) and is hence required for the effective production of the Hh signal. This chain is Protein dispatched (disp), found in Drosophila melanogaster (Fruit fly).